A 183-amino-acid polypeptide reads, in one-letter code: Troponin I, fast skeletal muscle (183 aa).

At Ser2 the chain carries N-acetylserine. The interval 2-48 (SDEEKKRRAATARRQHLKSAMLQLAVTEIEKEAAAKEVEKQNYLAEH) is involved in binding TNC. Residues 97–117 (SQKLFDLRGKFKRPPLRRVRM) form an involved in binding TNC and actin region.

The protein belongs to the troponin I family. Binds to actin and tropomyosin. The N-terminus is blocked.

Troponin I is the inhibitory subunit of troponin, the thin filament regulatory complex which confers calcium-sensitivity to striated muscle actomyosin ATPase activity. This chain is Troponin I, fast skeletal muscle (TNNI2), found in Gallus gallus (Chicken).